The following is a 361-amino-acid chain: D-alanine--D-alanine ligase (361 aa).

The region spanning 139-336 is the ATP-grasp domain; it reads KLLLKEKEIS…FSQIIDNMIN (198 aa). ATP is bound at residue 167-222; it reads EKNLGYPMIVKPARLGSSIGVSKVVDRKNFEEAVKNVLLFDNKVLVEKWINAREIN. Residues Asp296, Glu307, and Asn309 each coordinate Mg(2+).

It belongs to the D-alanine--D-alanine ligase family. The cofactor is Mg(2+). It depends on Mn(2+) as a cofactor.

Its subcellular location is the cytoplasm. The enzyme catalyses 2 D-alanine + ATP = D-alanyl-D-alanine + ADP + phosphate + H(+). It participates in cell wall biogenesis; peptidoglycan biosynthesis. Functionally, cell wall formation. This Thermosipho melanesiensis (strain DSM 12029 / CIP 104789 / BI429) protein is D-alanine--D-alanine ligase.